The chain runs to 219 residues: PRELI domain-containing protein 1, mitochondrial (219 aa).

The region spanning 36–174 (TEDIVHREVT…ILAKLQGEAP (139 aa)) is the PRELI/MSF1 domain.

As to quaternary structure, forms a complex with TRIAP1 in the mitochondrion intermembrane space. Interacts with OPA1 and AIFM1. In terms of tissue distribution, highly expressed in fetal liver; less expressed in fetal brain, lung, and kidney. At the adult stage, expression is drastically reduced in the liver but highly expressed in the spleen, brain, lung, lymph nodes and peripheral blood leukocytes.

It is found in the mitochondrion. The protein resides in the mitochondrion intermembrane space. The catalysed reaction is a 1,2-diacyl-sn-glycero-3-phosphate(in) = a 1,2-diacyl-sn-glycero-3-phosphate(out). Involved in the modulation of the mitochondrial apoptotic pathway by ensuring the accumulation of cardiolipin (CL) in mitochondrial membranes. In vitro, the TRIAP1:PRELID1 complex mediates the transfer of phosphatidic acid (PA) between liposomes and probably functions as a PA transporter across the mitochondrion intermembrane space to provide PA for CL synthesis in the inner membrane. Regulates the mitochondrial apoptotic pathway in primary Th cells. Regulates Th cell differentiation by down-regulating STAT6 thereby reducing IL-4-induced Th2 cell number. May be important for the development of vital and immunocompetent organs. The chain is PRELI domain-containing protein 1, mitochondrial (PRELID1) from Homo sapiens (Human).